We begin with the raw amino-acid sequence, 82 residues long: Small ribosomal subunit protein uS17 (82 aa).

Belongs to the universal ribosomal protein uS17 family. As to quaternary structure, part of the 30S ribosomal subunit.

Its function is as follows. One of the primary rRNA binding proteins, it binds specifically to the 5'-end of 16S ribosomal RNA. This is Small ribosomal subunit protein uS17 from Aeromonas hydrophila subsp. hydrophila (strain ATCC 7966 / DSM 30187 / BCRC 13018 / CCUG 14551 / JCM 1027 / KCTC 2358 / NCIMB 9240 / NCTC 8049).